The sequence spans 287 residues: ATP synthase gamma chain (287 aa).

Belongs to the ATPase gamma chain family. In terms of assembly, F-type ATPases have 2 components, CF(1) - the catalytic core - and CF(0) - the membrane proton channel. CF(1) has five subunits: alpha(3), beta(3), gamma(1), delta(1), epsilon(1). CF(0) has three main subunits: a, b and c.

The protein resides in the cell membrane. Its function is as follows. Produces ATP from ADP in the presence of a proton gradient across the membrane. The gamma chain is believed to be important in regulating ATPase activity and the flow of protons through the CF(0) complex. In Staphylococcus carnosus (strain TM300), this protein is ATP synthase gamma chain.